The following is a 152-amino-acid chain: Large ribosomal subunit protein uL13 (152 aa).

Positions 130-152 are disordered; the sequence is HPHEAQSPEVLDLASKNPKNTRS.

Belongs to the universal ribosomal protein uL13 family. In terms of assembly, part of the 50S ribosomal subunit.

Functionally, this protein is one of the early assembly proteins of the 50S ribosomal subunit, although it is not seen to bind rRNA by itself. It is important during the early stages of 50S assembly. This is Large ribosomal subunit protein uL13 from Dinoroseobacter shibae (strain DSM 16493 / NCIMB 14021 / DFL 12).